Consider the following 399-residue polypeptide: MSIVVENSTVLSALTEKFAEVFGDTKKVEYFFSPGRINLIGEHTDYNGGYVFPASITIGTTGLARLREDNKVKLYSENFPKLGVIEFDLDDVENKDGELWSNYVKGMIVMLKGAGYEIDKGFELLIKGEIPTASGLSSSASLELLVGVVLDDLFKLSVPRLELVQLGQKTENDYIGVNSGILDQFAIGFGEVKKAILLDCNTLKYEMVPVELRDYDIVIMNTNKPRALTESKYNERFAETREALKRMQTKLDIQSLGELSNEEFDANTDLIGDETLIKRARHAVYENNRTKIAQKAFVAGNLTKFGELLNASHASLKDDYEVTGLELDTLAETAQKQAGVLGARMTGAGFGGCAIALVAHDNVSAFEKAVGEVYEEVVGYPASFYVAQIGSGSTKLDVE.

A substrate-binding site is contributed by 42-45 (EHTD). ATP-binding positions include serine 76 and 133 to 139 (ASGLSSS). Positions 139 and 171 each coordinate Mg(2+). Aspartate 183 serves as the catalytic Proton acceptor. Tyrosine 233 serves as a coordination point for substrate.

Belongs to the GHMP kinase family. GalK subfamily.

Its subcellular location is the cytoplasm. The catalysed reaction is alpha-D-galactose + ATP = alpha-D-galactose 1-phosphate + ADP + H(+). It participates in carbohydrate metabolism; galactose metabolism. In terms of biological role, catalyzes the transfer of the gamma-phosphate of ATP to D-galactose to form alpha-D-galactose-1-phosphate (Gal-1-P). The polypeptide is Galactokinase (Lactococcus lactis subsp. cremoris (strain MG1363)).